Reading from the N-terminus, the 946-residue chain is Alanine--tRNA ligase, cytoplasmic (946 aa).

Residues histidine 591, histidine 595, cysteine 710, and histidine 714 each coordinate Zn(2+).

This sequence belongs to the class-II aminoacyl-tRNA synthetase family. As to quaternary structure, monomer. Zn(2+) serves as cofactor.

It localises to the cytoplasm. The catalysed reaction is tRNA(Ala) + L-alanine + ATP = L-alanyl-tRNA(Ala) + AMP + diphosphate. Catalyzes the attachment of alanine to tRNA(Ala) in a two-step reaction: alanine is first activated by ATP to form Ala-AMP and then transferred to the acceptor end of tRNA(Ala). Also edits incorrectly charged tRNA(Ala) via its editing domain. The sequence is that of Alanine--tRNA ligase, cytoplasmic (alaS) from Dictyostelium discoideum (Social amoeba).